Consider the following 198-residue polypeptide: Glycerol-3-phosphate acyltransferase (198 aa).

Transmembrane regions (helical) follow at residues 4–24 (LALI…AVLI), 53–75 (SAAG…GGYF), 80–102 (PFML…FFHF), 112–132 (LGAL…CWVV), and 134–154 (VLVT…APLF).

This sequence belongs to the PlsY family. In terms of assembly, probably interacts with PlsX.

It is found in the cell inner membrane. The enzyme catalyses an acyl phosphate + sn-glycerol 3-phosphate = a 1-acyl-sn-glycero-3-phosphate + phosphate. The protein operates within lipid metabolism; phospholipid metabolism. Catalyzes the transfer of an acyl group from acyl-phosphate (acyl-PO(4)) to glycerol-3-phosphate (G3P) to form lysophosphatidic acid (LPA). This enzyme utilizes acyl-phosphate as fatty acyl donor, but not acyl-CoA or acyl-ACP. This Aliivibrio fischeri (strain ATCC 700601 / ES114) (Vibrio fischeri) protein is Glycerol-3-phosphate acyltransferase.